A 280-amino-acid polypeptide reads, in one-letter code: Putative pyruvate, phosphate dikinase regulatory protein (280 aa).

154–161 contacts ADP; the sequence is GVSRTSKT.

The protein belongs to the pyruvate, phosphate/water dikinase regulatory protein family. PDRP subfamily.

It catalyses the reaction N(tele)-phospho-L-histidyl/L-threonyl-[pyruvate, phosphate dikinase] + ADP = N(tele)-phospho-L-histidyl/O-phospho-L-threonyl-[pyruvate, phosphate dikinase] + AMP + H(+). The catalysed reaction is N(tele)-phospho-L-histidyl/O-phospho-L-threonyl-[pyruvate, phosphate dikinase] + phosphate + H(+) = N(tele)-phospho-L-histidyl/L-threonyl-[pyruvate, phosphate dikinase] + diphosphate. Its function is as follows. Bifunctional serine/threonine kinase and phosphorylase involved in the regulation of the pyruvate, phosphate dikinase (PPDK) by catalyzing its phosphorylation/dephosphorylation. The protein is Putative pyruvate, phosphate dikinase regulatory protein of Nitrobacter winogradskyi (strain ATCC 25391 / DSM 10237 / CIP 104748 / NCIMB 11846 / Nb-255).